The primary structure comprises 230 residues: Preflagellin peptidase (230 aa).

Met1 is a topological domain (cytoplasmic). A helical membrane pass occupies residues 2-18 (IEYIIGALGLIIASVQD). Residues 19 to 23 (FRSRE) lie on the Extracellular side of the membrane. The chain crosses the membrane as a helical span at residues 24 to 46 (IEDYIWIFLAVFGVLFAIYSSIT). Residues 47-49 (LLD) lie on the Cytoplasmic side of the membrane. A helical membrane pass occupies residues 50–72 (YSILINSISGFVICFILGYMMFL). The Extracellular segment spans residues 73-78 (SGIGGG). Residues 79–89 (DGKMLIGLGAL) form a helical membrane-spanning segment. At 90–110 (VPKFQMPIYTSLGTLLNLNYV) the chain is on the cytoplasmic side. Residues 111–139 (PTFPIMVFINGIFFMVFLPFVILFRNILN) traverse the membrane as a helical segment. Residues 140-204 (GARPKTGKEF…EEIWVTPQIP (65 aa)) are Extracellular-facing. The chain crosses the membrane as a helical span at residues 205–216 (LIIPITLSYLVT). Topologically, residues 217 to 230 (PIIGDRILDFLIPF) are cytoplasmic.

The protein belongs to the peptidase A24 family. Archaeal preflagellin peptidase subfamily.

The protein resides in the cell membrane. It catalyses the reaction Cleaves the signal peptide of 3 to 12 amino acids from the N-terminal of preflagellin, usually at Arg-Gly-|- or Lys-Gly-|-, to release flagellin.. Cleaves the N-terminal leader peptide from preflagellins. In Methanococcus maripaludis (strain C6 / ATCC BAA-1332), this protein is Preflagellin peptidase (flaK).